The sequence spans 459 residues: Limonoid 7-O-acetyltransferse (459 aa).

Residues His-167 and Asp-391 each act as proton acceptor in the active site.

It belongs to the plant acyltransferase family. As to quaternary structure, monomer. Expressed in maturing fruits and in juice vesicles.

It carries out the reaction (1S)-1-acetoxy-luvungin A + acetyl-CoA = (1S)-1,7-diacetoxy-luvungin A + CoA. It participates in secondary metabolite biosynthesis; terpenoid biosynthesis. Its function is as follows. Acetyltransferase involved in the biosynthesis of limonoids triterpene natural products such as limonin, a compound with insecticidal activity responsible for the bitter taste in citrus. Catalyzes the formation of (1S)-1,7-diacetoxy-luvungin A from (1S)-1-acetoxy-luvungin A. This chain is Limonoid 7-O-acetyltransferse, found in Citrus sinensis (Sweet orange).